The sequence spans 332 residues: CMRF35-like molecule 1 (332 aa).

Positions M1–T18 are cleaved as a signal peptide. Topologically, residues A19 to S181 are extracellular. An Ig-like V-type domain is found at P22–S125. 2 disulfides stabilise this stretch: C41-C109 and C55-C63. N89 carries N-linked (GlcNAc...) asparagine glycosylation. The chain crosses the membrane as a helical span at residues V182–A202. At W203–P332 the chain is on the cytoplasmic side. Disordered regions lie at residues P251–Q270 and P313–P332.

This sequence belongs to the CD300 family. Interacts with PTPN6/SHP-1 in a tyrosine phosphorylation dependent manner. Interacts with IL4R. Phosphorylated on tyrosine.

Its subcellular location is the cell membrane. Acts as an inhibitory receptor for myeloid cells and mast cells. Positively regulates the phagocytosis of apoptotic cells (efferocytosis) via phosphatidylserine (PS) recognition; recognizes and binds PS as a ligand which is expressed on the surface of apoptotic cells. Plays an important role in the maintenance of immune homeostasis, by promoting macrophage-mediated efferocytosis and by inhibiting dendritic cell-mediated efferocytosis. Negatively regulates Fc epsilon receptor-dependent mast cell activation and allergic responses via binding to ceramide and sphingomyelin which act as ligands. May act as a coreceptor for interleukin 4 (IL-4). Associates with and regulates IL-4 receptor alpha-mediated responses by augmenting IL-4- and IL-13-induced signaling. Negatively regulates the Toll-like receptor (TLR) signaling mediated by MYD88 and TRIF through activation of PTPN6/SHP-1 and PTPN11/SHP-2. Inhibits osteoclast formation. Induces macrophage cell death upon engagement. This Rattus norvegicus (Rat) protein is CMRF35-like molecule 1 (Cd300lf).